The sequence spans 403 residues: Tryptophan synthase beta chain 1 (403 aa).

Position 96 is an N6-(pyridoxal phosphate)lysine (Lys96).

The protein belongs to the TrpB family. In terms of assembly, tetramer of two alpha and two beta chains. It depends on pyridoxal 5'-phosphate as a cofactor.

It catalyses the reaction (1S,2R)-1-C-(indol-3-yl)glycerol 3-phosphate + L-serine = D-glyceraldehyde 3-phosphate + L-tryptophan + H2O. It participates in amino-acid biosynthesis; L-tryptophan biosynthesis; L-tryptophan from chorismate: step 5/5. In terms of biological role, the beta subunit is responsible for the synthesis of L-tryptophan from indole and L-serine. This Wolinella succinogenes (strain ATCC 29543 / DSM 1740 / CCUG 13145 / JCM 31913 / LMG 7466 / NCTC 11488 / FDC 602W) (Vibrio succinogenes) protein is Tryptophan synthase beta chain 1 (trpB1).